A 507-amino-acid chain; its full sequence is Arabinose import ATP-binding protein AraG (507 aa).

2 consecutive ABC transporter domains span residues 14 to 249 (LRFN…MVGR) and 249 to 505 (RDIQ…LPRT). 46-53 (GENGAGKS) lines the ATP pocket.

This sequence belongs to the ABC transporter superfamily. Arabinose importer (TC 3.A.1.2.2) family. As to quaternary structure, the complex is composed of two ATP-binding proteins (AraG), two transmembrane proteins (AraH) and a solute-binding protein (AraF).

The protein localises to the cell inner membrane. It catalyses the reaction L-arabinose(out) + ATP + H2O = L-arabinose(in) + ADP + phosphate + H(+). Its function is as follows. Part of the ABC transporter complex AraFGH involved in arabinose import. Responsible for energy coupling to the transport system. The polypeptide is Arabinose import ATP-binding protein AraG (Pseudomonas savastanoi pv. phaseolicola (strain 1448A / Race 6) (Pseudomonas syringae pv. phaseolicola (strain 1448A / Race 6))).